A 274-amino-acid chain; its full sequence is Dermonecrotic toxin SdSicTox-betaIIB1biii (274 aa).

The active site involves His5. Residues Glu25 and Asp27 each contribute to the Mg(2+) site. Catalysis depends on His41, which acts as the Nucleophile. 2 cysteine pairs are disulfide-bonded: Cys45/Cys51 and Cys47/Cys190. Asp85 contributes to the Mg(2+) binding site.

Belongs to the arthropod phospholipase D family. Class II subfamily. It depends on Mg(2+) as a cofactor. Expressed by the venom gland.

It localises to the secreted. The enzyme catalyses an N-(acyl)-sphingosylphosphocholine = an N-(acyl)-sphingosyl-1,3-cyclic phosphate + choline. It carries out the reaction an N-(acyl)-sphingosylphosphoethanolamine = an N-(acyl)-sphingosyl-1,3-cyclic phosphate + ethanolamine. It catalyses the reaction a 1-acyl-sn-glycero-3-phosphocholine = a 1-acyl-sn-glycero-2,3-cyclic phosphate + choline. The catalysed reaction is a 1-acyl-sn-glycero-3-phosphoethanolamine = a 1-acyl-sn-glycero-2,3-cyclic phosphate + ethanolamine. Functionally, dermonecrotic toxins cleave the phosphodiester linkage between the phosphate and headgroup of certain phospholipids (sphingolipid and lysolipid substrates), forming an alcohol (often choline) and a cyclic phosphate. This toxin acts on sphingomyelin (SM). It may also act on ceramide phosphoethanolamine (CPE), lysophosphatidylcholine (LPC) and lysophosphatidylethanolamine (LPE), but not on lysophosphatidylserine (LPS), and lysophosphatidylglycerol (LPG). It acts by transphosphatidylation, releasing exclusively cyclic phosphate products as second products. Induces dermonecrosis, hemolysis, increased vascular permeability, edema, inflammatory response, and platelet aggregation. This Sicarius cf. damarensis (strain GJB-2008) (Six-eyed sand spider) protein is Dermonecrotic toxin SdSicTox-betaIIB1biii.